A 405-amino-acid polypeptide reads, in one-letter code: Tryptophan synthase beta chain (405 aa).

Lysine 95 is modified (N6-(pyridoxal phosphate)lysine).

This sequence belongs to the TrpB family. Tetramer of two alpha and two beta chains. Pyridoxal 5'-phosphate is required as a cofactor.

The catalysed reaction is (1S,2R)-1-C-(indol-3-yl)glycerol 3-phosphate + L-serine = D-glyceraldehyde 3-phosphate + L-tryptophan + H2O. It functions in the pathway amino-acid biosynthesis; L-tryptophan biosynthesis; L-tryptophan from chorismate: step 5/5. Functionally, the beta subunit is responsible for the synthesis of L-tryptophan from indole and L-serine. The polypeptide is Tryptophan synthase beta chain (Pseudomonas entomophila (strain L48)).